The chain runs to 207 residues: Small ribosomal subunit protein uS4 (207 aa).

Positions 31 to 53 (KAKFDSKPGQHGRTSGARTSDFG) are disordered. The region spanning 97–160 (SRLDNVVYRM…KKQNRIVEAL (64 aa)) is the S4 RNA-binding domain.

The protein belongs to the universal ribosomal protein uS4 family. In terms of assembly, part of the 30S ribosomal subunit. Contacts protein S5. The interaction surface between S4 and S5 is involved in control of translational fidelity.

One of the primary rRNA binding proteins, it binds directly to 16S rRNA where it nucleates assembly of the body of the 30S subunit. Functionally, with S5 and S12 plays an important role in translational accuracy. This chain is Small ribosomal subunit protein uS4, found in Albidiferax ferrireducens (strain ATCC BAA-621 / DSM 15236 / T118) (Rhodoferax ferrireducens).